We begin with the raw amino-acid sequence, 549 residues long: Probable glucuronosyltransferase Os01g0157700 (549 aa).

Residues 1–16 are Cytoplasmic-facing; the sequence is MDSEERSKKRLRLWSR. A helical; Signal-anchor for type II membrane protein membrane pass occupies residues 17–37; that stretch reads AVVHFSLCFAIGVFAALLPLA. At 38 to 549 the chain is on the lumenal side; the sequence is ATGATSIDSI…TPEEGKTKEG (512 aa). N-linked (GlcNAc...) asparagine glycans are attached at residues N112, N139, N214, N229, N240, N251, N264, N269, and N300. Residues 232 to 252 are disordered; it reads ETTWDSSSNTTQTTWDSSSNK. Over residues 350 to 363 the composition is skewed to basic and acidic residues; it reads IEQATPEKESLTKG. Disordered regions lie at residues 350–371, 413–432, and 441–524; these read IEQA…SHDM, EQET…ESHD, and KIEE…KETH. N421 and N452 each carry an N-linked (GlcNAc...) asparagine glycan. Basic and acidic residues-rich tracts occupy residues 441-465, 472-496, and 503-524; these read KIEE…HDMM, KIDE…HDMM, and KIEE…KETH.

It belongs to the glycosyltransferase 43 family.

It is found in the golgi apparatus membrane. Involved in the synthesis of glucuronoxylan hemicellulose in secondary cell walls. The sequence is that of Probable glucuronosyltransferase Os01g0157700 from Oryza sativa subsp. japonica (Rice).